Consider the following 459-residue polypeptide: Glycosyl hydrolase family 109 protein (459 aa).

The segment at residues 1-31 (MHNIHRRHFLKAAGAVTAGLITANITASTHA) is a signal peptide (tat-type signal). Residues 64–65 (ER), Asp86, 135–138 (WEWH), 155–156 (EV), and Asn184 each bind NAD(+). Residues Tyr213, Arg232, 244–247 (YPTH), and Tyr326 each bind substrate. Position 244 (Tyr244) interacts with NAD(+).

This sequence belongs to the Gfo/Idh/MocA family. Glycosyl hydrolase 109 subfamily. The cofactor is NAD(+). Post-translationally, predicted to be exported by the Tat system. The position of the signal peptide cleavage has not been experimentally proven.

Its function is as follows. Glycosidase. In Shewanella putrefaciens (strain CN-32 / ATCC BAA-453), this protein is Glycosyl hydrolase family 109 protein.